The following is a 252-amino-acid chain: MSAVKRISVSKYKTFMFDIEGTTTPIVFVAENLFPYIRKSLKTHIEETWESEETKKDVLSLKEQAEQDANSQSDFKDAPQINIDSQQSVIDNVVYNMDKDRKMTALKQLQGHMWRSGYESGNILGEVYDDAFDFFERIKKQGKNIYIYSSGSVQAQKLLFQYSTHGNLLPYFVDHFDTSNIGNKLEKSSYVKILERTGIPNSDILFLTDNIGEAIAAREAGIDSVLSVRPGTMKLPEDHTFEAVTSFEHLEF.

Positions 18 and 20 each coordinate Mg(2+). Substrate is bound by residues 149–150 (SS) and lysine 184. Position 209 (aspartate 209) interacts with Mg(2+).

This sequence belongs to the HAD-like hydrolase superfamily. MasA/MtnC family. Monomer. Requires Mg(2+) as cofactor.

It localises to the cytoplasm. Its subcellular location is the nucleus. It catalyses the reaction 5-methylsulfanyl-2,3-dioxopentyl phosphate + H2O = 1,2-dihydroxy-5-(methylsulfanyl)pent-1-en-3-one + phosphate. The protein operates within amino-acid biosynthesis; L-methionine biosynthesis via salvage pathway; L-methionine from S-methyl-5-thio-alpha-D-ribose 1-phosphate: step 3/6. It functions in the pathway amino-acid biosynthesis; L-methionine biosynthesis via salvage pathway; L-methionine from S-methyl-5-thio-alpha-D-ribose 1-phosphate: step 4/6. In terms of biological role, bifunctional enzyme that catalyzes the enolization of 2,3-diketo-5-methylthiopentyl-1-phosphate (DK-MTP-1-P) into the intermediate 2-hydroxy-3-keto-5-methylthiopentenyl-1-phosphate (HK-MTPenyl-1-P), which is then dephosphorylated to form the acireductone 1,2-dihydroxy-3-keto-5-methylthiopentene (DHK-MTPene). The chain is Enolase-phosphatase E1 from Naegleria gruberi (Amoeba).